The following is a 348-amino-acid chain: Phenylalanine--tRNA ligase alpha subunit (348 aa).

E268 contacts Mg(2+).

This sequence belongs to the class-II aminoacyl-tRNA synthetase family. Phe-tRNA synthetase alpha subunit type 1 subfamily. Tetramer of two alpha and two beta subunits. Mg(2+) serves as cofactor.

The protein resides in the cytoplasm. It carries out the reaction tRNA(Phe) + L-phenylalanine + ATP = L-phenylalanyl-tRNA(Phe) + AMP + diphosphate + H(+). In Bordetella parapertussis (strain 12822 / ATCC BAA-587 / NCTC 13253), this protein is Phenylalanine--tRNA ligase alpha subunit.